The sequence spans 77 residues: U8-lycotoxin-Ls1h (77 aa).

The signal sequence occupies residues 1 to 20 (MKLIIFTGLVLFAIVSLIEV). Residues 21–26 (QADNER) constitute a propeptide that is removed on maturation.

Belongs to the neurotoxin 19 (CSTX) family. 08 (U8-Lctx) subfamily. In terms of processing, contains 4 disulfide bonds. Expressed by the venom gland.

It localises to the secreted. In Lycosa singoriensis (Wolf spider), this protein is U8-lycotoxin-Ls1h.